The chain runs to 499 residues: Catalase (499 aa).

The tract at residues 1–25 (MTDRPIMTTSAGAPIPDNQNSLTAG) is disordered. Polar residues predominate over residues 7 to 23 (MTTSAGAPIPDNQNSLT). Catalysis depends on residues H55 and N127. Y337 lines the heme pocket.

This sequence belongs to the catalase family. Homotetramer. Heme is required as a cofactor.

The protein localises to the periplasm. It carries out the reaction 2 H2O2 = O2 + 2 H2O. Its function is as follows. Decomposes hydrogen peroxide into water and oxygen; serves to protect cells from the toxic effects of hydrogen peroxide. The chain is Catalase (katA) from Brucella abortus biovar 1 (strain 9-941).